Reading from the N-terminus, the 958-residue chain is Translation initiation factor IF-2 (958 aa).

Disordered stretches follow at residues 67-95 and 111-355; these read APAA…APAP and PAPA…VPRG. Over residues 75-95 the composition is skewed to pro residues; that stretch reads APAPGPAAPKAPAPAPAAPAP. Positions 140-161 are enriched in low complexity; it reads PAPARQGGQAPRPGGPRPGNNP. Over residues 195–206 the composition is skewed to basic and acidic residues; the sequence is RGERRNDGERPG. Low complexity predominate over residues 209–221; it reads RPAAGAGGPRPAA. Pro residues predominate over residues 228–241; the sequence is PGAPRPGAPRPGAP. The span at 268 to 325 shows a compositional bias: gly residues; it reads GGAGRPGGAGRPGGGPGRPGGAPGAGTGGGAPAGGGFGKGGRGRGGTQGAFGKGGAGR. Residues 326 to 335 show a composition bias toward basic residues; sequence GKQRKSKRAK. The region spanning 450-621 is the tr-type G domain; the sequence is ARAPVVTVMG…AVLLTADAAL (172 aa). The interval 459 to 466 is G1; sequence GHVDHGKT. GTP is bound at residue 459–466; the sequence is GHVDHGKT. Residues 484-488 are G2; sequence GITQH. Positions 509–512 are G3; sequence DTPG. GTP is bound by residues 509 to 513 and 563 to 566; these read DTPGH and NKID. Residues 563–566 form a G4 region; it reads NKID. The tract at residues 599 to 601 is G5; the sequence is SAR.

This sequence belongs to the TRAFAC class translation factor GTPase superfamily. Classic translation factor GTPase family. IF-2 subfamily.

It is found in the cytoplasm. Its function is as follows. One of the essential components for the initiation of protein synthesis. Protects formylmethionyl-tRNA from spontaneous hydrolysis and promotes its binding to the 30S ribosomal subunits. Also involved in the hydrolysis of GTP during the formation of the 70S ribosomal complex. The chain is Translation initiation factor IF-2 from Paenarthrobacter aurescens (strain TC1).